The chain runs to 100 residues: Transcription elongation factor A protein-like 7 (100 aa).

The span at 1–32 (MQKPCKENEGKPKCSVPKREEKRPYGEFERQQ) shows a compositional bias: basic and acidic residues. Positions 1-34 (MQKPCKENEGKPKCSVPKREEKRPYGEFERQQTE) are disordered. Residues 60–88 (EEMTREGDEMERCLEEIRGLRKKFRALHS) are a coiled coil.

This sequence belongs to the TFS-II family. TFA subfamily. Highly expressed in normal and fetal brain tissues, and weakly expressed in uterus and ovary. Down-regulated in epithelial ovarian, cervical, prostate, breast, brain and lung cancer cell lines and in brain and ovarian tumors.

It is found in the nucleus. In terms of biological role, plays a role in the negative regulation of NF-kappa-B signaling at the basal level by modulating transcriptional activity of NF-kappa-B on its target gene promoters. Associates with cyclin D1 promoter containing Myc E-box sequence and transcriptionally represses cyclin D1 expression. Regulates telomerase reverse transcriptase expression and telomerase activity in both ALT (alternative lengthening of telomeres)and telomerase-positive cell lines. The protein is Transcription elongation factor A protein-like 7 (TCEAL7) of Homo sapiens (Human).